Here is a 411-residue protein sequence, read N- to C-terminus: Glycerol-3-phosphate dehydrogenase [NAD(+)] (411 aa).

NAD(+)-binding positions include 71–76 (GSGNWG), Phe103, and Phe159. Lys182 lines the substrate pocket. Ala215 serves as a coordination point for NAD(+). Lys275 acts as the Proton acceptor in catalysis. NAD(+) contacts are provided by Arg340 and Gln369. A substrate-binding site is contributed by 340 to 341 (RN).

The protein belongs to the NAD-dependent glycerol-3-phosphate dehydrogenase family.

The catalysed reaction is sn-glycerol 3-phosphate + NAD(+) = dihydroxyacetone phosphate + NADH + H(+). The chain is Glycerol-3-phosphate dehydrogenase [NAD(+)] (GPD) from Lachancea thermotolerans (Yeast).